The chain runs to 126 residues: Spermidine export protein MdtJ (126 aa).

A run of 4 helical transmembrane segments spans residues 1 to 21, 32 to 52, 55 to 75, and 82 to 102; these read MMIY…GTLS, TGHI…ALAV, VALG…ITVF, and ESLS…IMLV. The interval 104 to 126 is disordered; that stretch reads SGTRKPKKPNSPNRNSGEHHATA.

Belongs to the drug/metabolite transporter (DMT) superfamily. Small multidrug resistance (SMR) (TC 2.A.7.1) family. MdtJ subfamily. As to quaternary structure, forms a complex with MdtI.

The protein localises to the cell inner membrane. In terms of biological role, catalyzes the excretion of spermidine. The sequence is that of Spermidine export protein MdtJ from Yersinia enterocolitica serotype O:8 / biotype 1B (strain NCTC 13174 / 8081).